The sequence spans 321 residues: Reticulon-2 (321 aa).

Disordered stretches follow at residues 1–36 (MGHVLSFTHCKDAPSTASSTPDSCPPEGEEDDSPVT) and 65–85 (PPVRARRGLGQSRVHAAPREE). Positions 134-321 (VKDLLYWRDI…TVKKPPAKQK (188 aa)) constitute a Reticulon domain. The next 2 helical transmembrane spans lie at 163-183 (FSVISVFAYGCLIILSVTLTL) and 250-270 (FLVIIYLLTYVGAVFNGITVL).

It is found in the endoplasmic reticulum membrane. The protein localises to the sarcoplasmic reticulum membrane. Its subcellular location is the cell membrane. It localises to the sarcolemma. The protein resides in the T-tubule. It is found in the cytoplasm. The protein localises to the myofibril. Its subcellular location is the sarcomere. It localises to the z line. The protein resides in the cytoskeleton. Functionally, inhibits amyloid precursor protein processing, probably by blocking BACE1 activity. Enhances trafficking of the glutamate transporter SLC1A1/EAAC1 from the endoplasmic reticulum to the cell surface. Plays a role in the translocation of SLC2A4/GLUT4 from intracellular membranes to the cell membrane which facilitates the uptake of glucose into the cell. This chain is Reticulon-2, found in Xenopus tropicalis (Western clawed frog).